A 483-amino-acid chain; its full sequence is UDP-N-acetylmuramoylalanine--D-glutamate ligase (483 aa).

Residue 119–125 (GTNGKTT) coordinates ATP.

This sequence belongs to the MurCDEF family.

The protein localises to the cytoplasm. The catalysed reaction is UDP-N-acetyl-alpha-D-muramoyl-L-alanine + D-glutamate + ATP = UDP-N-acetyl-alpha-D-muramoyl-L-alanyl-D-glutamate + ADP + phosphate + H(+). The protein operates within cell wall biogenesis; peptidoglycan biosynthesis. In terms of biological role, cell wall formation. Catalyzes the addition of glutamate to the nucleotide precursor UDP-N-acetylmuramoyl-L-alanine (UMA). The protein is UDP-N-acetylmuramoylalanine--D-glutamate ligase of Mycolicibacterium vanbaalenii (strain DSM 7251 / JCM 13017 / BCRC 16820 / KCTC 9966 / NRRL B-24157 / PYR-1) (Mycobacterium vanbaalenii).